The following is a 292-amino-acid chain: MGMPNKGVVLLDGQALAYNIEEDLKYKIQAINTQTHKRPKLAVILVGKDPASITYVNMKIKACERVGMDFDLKTLQENITEAQLLSLIKDYNNNQNISGVLVQLPLPRHIDSKMISEAIDPNKDVDGFHPLNIGKLCTQKESFLPATPMGVMRLLEHYHIGIKGKDVAIIGASNIIGKPLSMLMLNAGASVSVCHILTKDINFYTQNADIVCVGVGKPDLIKASMLKKGAVVVDIGINHLNDGRIVGDVDFTNAQKVASFITPVPKGVGPMTIVSLLENTLIAFEKQQRKGF.

Residues 171 to 173 (GAS), isoleucine 196, and isoleucine 237 contribute to the NADP(+) site.

Belongs to the tetrahydrofolate dehydrogenase/cyclohydrolase family. In terms of assembly, homodimer.

The enzyme catalyses (6R)-5,10-methylene-5,6,7,8-tetrahydrofolate + NADP(+) = (6R)-5,10-methenyltetrahydrofolate + NADPH. The catalysed reaction is (6R)-5,10-methenyltetrahydrofolate + H2O = (6R)-10-formyltetrahydrofolate + H(+). Its pathway is one-carbon metabolism; tetrahydrofolate interconversion. Functionally, catalyzes the oxidation of 5,10-methylenetetrahydrofolate to 5,10-methenyltetrahydrofolate and then the hydrolysis of 5,10-methenyltetrahydrofolate to 10-formyltetrahydrofolate. The sequence is that of Bifunctional protein FolD from Helicobacter acinonychis (strain Sheeba).